A 405-amino-acid polypeptide reads, in one-letter code: Imidazolonepropionase (405 aa).

Fe(3+) is bound by residues His-73 and His-75. Positions 73 and 75 each coordinate Zn(2+). Residues Arg-82, Tyr-145, and His-178 each coordinate 4-imidazolone-5-propanoate. Tyr-145 contacts N-formimidoyl-L-glutamate. Fe(3+) is bound at residue His-243. His-243 provides a ligand contact to Zn(2+). Gln-246 is a 4-imidazolone-5-propanoate binding site. Residue Asp-318 participates in Fe(3+) binding. Zn(2+) is bound at residue Asp-318. N-formimidoyl-L-glutamate contacts are provided by Asn-320 and Gly-322. A 4-imidazolone-5-propanoate-binding site is contributed by Thr-323.

This sequence belongs to the metallo-dependent hydrolases superfamily. HutI family. Zn(2+) serves as cofactor. The cofactor is Fe(3+).

It localises to the cytoplasm. It catalyses the reaction 4-imidazolone-5-propanoate + H2O = N-formimidoyl-L-glutamate. It functions in the pathway amino-acid degradation; L-histidine degradation into L-glutamate; N-formimidoyl-L-glutamate from L-histidine: step 3/3. In terms of biological role, catalyzes the hydrolytic cleavage of the carbon-nitrogen bond in imidazolone-5-propanoate to yield N-formimidoyl-L-glutamate. It is the third step in the universal histidine degradation pathway. This is Imidazolonepropionase from Brucella abortus (strain S19).